Consider the following 377-residue polypeptide: N-acetyldiaminopimelate deacetylase (377 aa).

Asp69 is a catalytic residue. Glu128 (proton acceptor) is an active-site residue.

The protein belongs to the peptidase M20A family. N-acetyldiaminopimelate deacetylase subfamily.

The enzyme catalyses N-acetyl-(2S,6S)-2,6-diaminopimelate + H2O = (2S,6S)-2,6-diaminopimelate + acetate. It participates in amino-acid biosynthesis; L-lysine biosynthesis via DAP pathway; LL-2,6-diaminopimelate from (S)-tetrahydrodipicolinate (acetylase route): step 3/3. Catalyzes the conversion of N-acetyl-diaminopimelate to diaminopimelate and acetate. The chain is N-acetyldiaminopimelate deacetylase from Streptococcus sanguinis (strain SK36).